We begin with the raw amino-acid sequence, 193 residues long: NADH-quinone oxidoreductase subunit B (193 aa).

Residues cysteine 72, cysteine 73, cysteine 137, and cysteine 167 each coordinate [4Fe-4S] cluster.

This sequence belongs to the complex I 20 kDa subunit family. As to quaternary structure, NDH-1 is composed of 14 different subunits. Subunits NuoB, C, D, E, F, and G constitute the peripheral sector of the complex. [4Fe-4S] cluster is required as a cofactor.

Its subcellular location is the cell inner membrane. The catalysed reaction is a quinone + NADH + 5 H(+)(in) = a quinol + NAD(+) + 4 H(+)(out). Its function is as follows. NDH-1 shuttles electrons from NADH, via FMN and iron-sulfur (Fe-S) centers, to quinones in the respiratory chain. The immediate electron acceptor for the enzyme in this species is believed to be ubiquinone. Couples the redox reaction to proton translocation (for every two electrons transferred, four hydrogen ions are translocated across the cytoplasmic membrane), and thus conserves the redox energy in a proton gradient. The protein is NADH-quinone oxidoreductase subunit B of Bartonella bacilliformis (strain ATCC 35685 / KC583 / Herrer 020/F12,63).